Consider the following 256-residue polypeptide: Pimeloyl-[acyl-carrier protein] methyl ester esterase (256 aa).

An AB hydrolase-1 domain is found at 15–242 (HLVLLHGWGL…AAHAPFISHP (228 aa)). Substrate is bound by residues W22, 82–83 (SL), and 143–147 (FLALQ). Catalysis depends on S82, which acts as the Nucleophile. Residues D207 and H235 contribute to the active site. H235 provides a ligand contact to substrate.

Belongs to the AB hydrolase superfamily. Carboxylesterase BioH family. Monomer.

It localises to the cytoplasm. The catalysed reaction is 6-carboxyhexanoyl-[ACP] methyl ester + H2O = 6-carboxyhexanoyl-[ACP] + methanol + H(+). It participates in cofactor biosynthesis; biotin biosynthesis. Functionally, the physiological role of BioH is to remove the methyl group introduced by BioC when the pimeloyl moiety is complete. It allows to synthesize pimeloyl-ACP via the fatty acid synthetic pathway through the hydrolysis of the ester bonds of pimeloyl-ACP esters. This is Pimeloyl-[acyl-carrier protein] methyl ester esterase from Escherichia coli (strain 55989 / EAEC).